Consider the following 1026-residue polypeptide: Cadherin-like and PC-esterase domain-containing protein 1 (1026 aa).

The N-terminal stretch at 1-34 is a signal peptide; it reads MVCRPVFPCRRRFCPRPFLVGLVVAICLFYQTLT. N-linked (GlcNAc...) asparagine glycans are attached at residues asparagine 251, asparagine 404, asparagine 413, asparagine 737, asparagine 791, and asparagine 985.

The protein belongs to the PC-esterase family.

The sequence is that of Cadherin-like and PC-esterase domain-containing protein 1 (CPED1) from Homo sapiens (Human).